Reading from the N-terminus, the 627-residue chain is Protein fem-1 homolog B (627 aa).

ANK repeat units lie at residues 45-74, 87-116, 120-149, and 153-182; these read QRST…VQTQ, DGAT…NVNH, TNST…NISI, and YDNT…DPNA. Zn(2+)-binding residues include histidine 185, cysteine 186, and histidine 218. ANK repeat units follow at residues 186–215 and 218–248; these read CGAT…AIVV and HGMT…DRRS. A TPR repeat occupies 344–377; the sequence is SHPIIYRGAVYADNMEFEQCIKLWLHALHLRQKG. ANK repeat units lie at residues 483 to 527 and 531 to 568; these read EGFT…EVNA and EGNS…HTDM.

Belongs to the fem-1 family. Component of a CRL2 E3 ubiquitin-protein ligase complex, also named ECS (Elongin BC-CUL2/5-SOCS-box protein) complex, composed of CUL2, Elongin BC (ELOB and ELOC), RBX1 and substrate-specific adapter FEM1B. Homooligomer. Interacts with PPM1F and PHTF1. Interacts with the death domain of FAS/TNFRSF6 and TNFRSF1A. Interacts with CHEK1. Interacts with NKX3-1. In terms of tissue distribution, present in adult testis (at protein level).

It localises to the cytoplasm. It is found in the nucleus. Its pathway is protein modification; protein ubiquitination. Activity of the CRL2(FEM1B) complex toward FNIP1 is inhibited by BEX family proteins (BEX1, BEX2, BEX3 and/or BEX4) in absence of reductive stress. Mechanistically, BEX proteins act as pseudosubstrate inhibitors that associate with FEM1B via zinc in absence of reductive stress, thereby preventing association between FEM1B and FNIP1. Its function is as follows. Substrate-recognition component of a Cul2-RING (CRL2) E3 ubiquitin-protein ligase complex of the DesCEND (destruction via C-end degrons) pathway, which recognizes a C-degron located at the extreme C terminus of target proteins, leading to their ubiquitination and degradation. The C-degron recognized by the DesCEND pathway is usually a motif of less than ten residues and can be present in full-length proteins, truncated proteins or proteolytically cleaved forms. The CRL2(FEM1B) complex specifically recognizes proteins ending with -Gly-Leu-Asp-Arg, such as CDK5R1, leading to their ubiquitination and degradation. Also acts as a regulator of the reductive stress response by mediating ubiquitination of reduced FNIP1: in response to reductive stress, the CRL2(FEM1B) complex specifically recognizes a conserved Cys degron in FNIP1 when this degron is reduced, leading to FNIP1 degradation and subsequent activation of mitochondria to recalibrate reactive oxygen species (ROS). Mechanistically, recognizes and binds reduced FNIP1 through two interface zinc ions, which act as a molecular glue that recruit reduced FNIP1 to FEM1B. Promotes ubiquitination of GLI1, suppressing GLI1 transcriptional activator activity. Promotes ubiquitination and degradation of ANKRD37. Promotes ubiquitination and degradation of SLBP. Involved in apoptosis by acting as a death receptor-associated protein that mediates apoptosis. Also involved in glucose homeostasis in pancreatic islet. May also act as an adapter/mediator in replication stress-induced signaling that leads to the activation of CHEK1. This chain is Protein fem-1 homolog B, found in Rattus norvegicus (Rat).